We begin with the raw amino-acid sequence, 127 residues long: Fluoride-specific ion channel FluC (127 aa).

2 consecutive transmembrane segments (helical) span residues 4-24 (WFWIGLGGAAGTLARYGLSTW) and 36-56 (GTLAVNVIGSFLLGAIGEIAA). Na(+) contacts are provided by glycine 75 and threonine 78. Residues 100-120 (LANIAITLVVCLLAGVLGMVV) traverse the membrane as a helical segment.

The protein belongs to the fluoride channel Fluc/FEX (TC 1.A.43) family.

It is found in the cell inner membrane. The catalysed reaction is fluoride(in) = fluoride(out). Its activity is regulated as follows. Na(+) is not transported, but it plays an essential structural role and its presence is essential for fluoride channel function. Fluoride-specific ion channel. Important for reducing fluoride concentration in the cell, thus reducing its toxicity. The chain is Fluoride-specific ion channel FluC from Sorangium cellulosum (strain So ce56) (Polyangium cellulosum (strain So ce56)).